Consider the following 393-residue polypeptide: MTTIGTPLTASATKILLLGSGELGKEVAIEAQRLGVEVIAVDRYPNAPAMQVAHRRHVVSMLDAPALRSIIEAEKPDYIVPEIEAIATEELIKLEAEGYPVVPTARAARLTMDREGIRRLAAEELGLVTSPYRFADTREEFLAACDAVGFPCVVKPVMSSSGKGQSVARDAASAEASWDYAQTAGRAGAGRVIVEGFVDFDYEITLLTVRHAGGTSFCAPIGHRQEKGDYRESWQPHPMSQSALAKAQAMAGAVTEALGGRGIFGVELFIKGDAVIFSEVSPRPHDTGMVTLISQDLSEFALHVRAILGLPIPAIRLYGPAASRVILGEGDSTSPRFAIDPAALAQPDTAIKLFGKPELHGTRRLGVALALGRDVEEAKAKAIAAASHVKVEL.

N(1)-(5-phospho-beta-D-ribosyl)glycinamide-binding positions include 22-23 (EL) and glutamate 82. Residues arginine 114, lysine 155, 160–165 (SSGKGQ), 195–198 (EGFV), and glutamate 203 each bind ATP. Residues 119-308 (RLAAEELGLV…EFALHVRAIL (190 aa)) enclose the ATP-grasp domain. Glutamate 267 and glutamate 279 together coordinate Mg(2+). N(1)-(5-phospho-beta-D-ribosyl)glycinamide contacts are provided by residues aspartate 286, lysine 356, and 363–364 (RR).

It belongs to the PurK/PurT family. Homodimer.

The catalysed reaction is N(1)-(5-phospho-beta-D-ribosyl)glycinamide + formate + ATP = N(2)-formyl-N(1)-(5-phospho-beta-D-ribosyl)glycinamide + ADP + phosphate + H(+). It functions in the pathway purine metabolism; IMP biosynthesis via de novo pathway; N(2)-formyl-N(1)-(5-phospho-D-ribosyl)glycinamide from N(1)-(5-phospho-D-ribosyl)glycinamide (formate route): step 1/1. Functionally, involved in the de novo purine biosynthesis. Catalyzes the transfer of formate to 5-phospho-ribosyl-glycinamide (GAR), producing 5-phospho-ribosyl-N-formylglycinamide (FGAR). Formate is provided by PurU via hydrolysis of 10-formyl-tetrahydrofolate. The sequence is that of Formate-dependent phosphoribosylglycinamide formyltransferase from Solidesulfovibrio magneticus (strain ATCC 700980 / DSM 13731 / RS-1) (Desulfovibrio magneticus).